Reading from the N-terminus, the 466-residue chain is Ribulose bisphosphate carboxylase large chain (466 aa).

At K4 the chain carries N6,N6,N6-trimethyllysine. 2 residues coordinate substrate: N113 and T163. K165 acts as the Proton acceptor in catalysis. Position 167 (K167) interacts with substrate. 3 residues coordinate Mg(2+): K191, D193, and E194. K191 carries the post-translational modification N6-carboxylysine. The active-site Proton acceptor is H284. The substrate site is built by R285, H317, and S369.

Belongs to the RuBisCO large chain family. Type I subfamily. In terms of assembly, heterohexadecamer of 8 large chains and 8 small chains; disulfide-linked. The disulfide link is formed within the large subunit homodimers. Mg(2+) is required as a cofactor. Post-translationally, the disulfide bond which can form in the large chain dimeric partners within the hexadecamer appears to be associated with oxidative stress and protein turnover.

The protein localises to the plastid. It is found in the chloroplast. It catalyses the reaction 2 (2R)-3-phosphoglycerate + 2 H(+) = D-ribulose 1,5-bisphosphate + CO2 + H2O. It carries out the reaction D-ribulose 1,5-bisphosphate + O2 = 2-phosphoglycolate + (2R)-3-phosphoglycerate + 2 H(+). RuBisCO catalyzes two reactions: the carboxylation of D-ribulose 1,5-bisphosphate, the primary event in carbon dioxide fixation, as well as the oxidative fragmentation of the pentose substrate in the photorespiration process. Both reactions occur simultaneously and in competition at the same active site. The protein is Ribulose bisphosphate carboxylase large chain of Drimys winteri (Winter's bark).